The sequence spans 304 residues: MGFYSLKQLLLLYIIIMALFSDLKLAKSSSPEYTNLIYKGCARQRLSDPSGLYSQALSAMYGLLVTQSTKTRFYKTTTGTTSQTSVTGLFQCRGDLSNNDCYNCVSRLPVLSGKLCGKTIAARVQLSGCYLLYEISGFAQISGMELLFKTCGKNNVAGTGFEQRRDTAFGVMQNGVVQGHGFYATTYESVYVLGQCEGDIGDSDCSGCIKNALQRAQVECGSSISGQIYLHKCFVGYSFYPNGVPKRSSPYPSSGSSGSSSSSSSSGTTGKTVAIIVGGTAGVGFLVICLLFVKNLMKKKYDDY.

The signal sequence occupies residues 1–26; the sequence is MGFYSLKQLLLLYIIIMALFSDLKLA. The Extracellular portion of the chain corresponds to 27–272; sequence KSSSPEYTNL…SSSSGTTGKT (246 aa). 2 consecutive Gnk2-homologous domains span residues 34–138 and 143–242; these read TNLI…ISGF and GMEL…FYPN. Cystine bridges form between cysteine 41/cysteine 116, cysteine 92/cysteine 101, cysteine 104/cysteine 129, cysteine 151/cysteine 220, cysteine 196/cysteine 205, and cysteine 208/cysteine 233. A helical transmembrane segment spans residues 273-293; it reads VAIIVGGTAGVGFLVICLLFV. Residues 273 to 293 form a necessary and sufficient for plasmodesmal targeting region; the sequence is VAIIVGGTAGVGFLVICLLFV. Topologically, residues 294 to 304 are cytoplasmic; the sequence is KNLMKKKYDDY.

The protein belongs to the cysteine-rich repeat secretory protein family. Plasmodesmata-located proteins (PDLD) subfamily. As to quaternary structure, (Microbial infection) Interacts with Grapevine fanleaf virus (GFLV) 2B-MP. Highly expressed in inflorescence pedacel and shoot apex. Expressed in the outermost L1 layer of the shoot apical meristem and in the epidermis of bulging floral primordia. Within the L1, expression was restricted to the peripheral zone (at protein level).

Its subcellular location is the cell membrane. It is found in the cell junction. It localises to the plasmodesma. In terms of biological role, modulates cell-to-cell trafficking. The chain is Plasmodesmata-located protein 3 from Arabidopsis thaliana (Mouse-ear cress).